The chain runs to 419 residues: E3 ubiquitin-protein ligase RNF130 (419 aa).

The first 27 residues, 1–27, serve as a signal peptide directing secretion; that stretch reads MSGAARAGPARLAALALLTCSLWPTRA. Residues 28 to 194 lie on the Extracellular side of the membrane; the sequence is DNASQEYYTA…MPPKNFSRGS (167 aa). N-linked (GlcNAc...) asparagine glycans are attached at residues Asn29, Asn40, Asn112, Asn135, Asn172, and Asn189. The 72-residue stretch at 105–176 folds into the PA domain; it reads IALLQRGNCT…SYLEKNISVQ (72 aa). A helical membrane pass occupies residues 195 to 217; it reads LVFVSISFIVLMIISSAWLIFYF. Residues 218–419 lie on the Cytoplasmic side of the membrane; it reads IQKIRYTNAR…SLNANEVEWF (202 aa). An RING-type zinc finger spans residues 264–305; that stretch reads CAVCIESYKQNDVVRVLPCKHVFHKSCVDPWLSEHCTCPMCK.

In terms of tissue distribution, expression is highest in liver, with lesser amounts in the lung, spleen, brain, heart, kidney and testis.

Its subcellular location is the membrane. It localises to the cytoplasm. It catalyses the reaction S-ubiquitinyl-[E2 ubiquitin-conjugating enzyme]-L-cysteine + [acceptor protein]-L-lysine = [E2 ubiquitin-conjugating enzyme]-L-cysteine + N(6)-ubiquitinyl-[acceptor protein]-L-lysine.. The protein operates within protein modification; protein ubiquitination. In terms of biological role, acts as an E3 ubiquitin-protein ligase. May have a role during the programmed cell death of hematopoietic cells. The sequence is that of E3 ubiquitin-protein ligase RNF130 from Mus musculus (Mouse).